The chain runs to 120 residues: Proteinase inhibitor (120 aa).

A signal peptide spans 1-19 (MKQLIIATLLSALSGGCMA). A disulfide bridge connects residues cysteine 43 and cysteine 65.

The protein belongs to the protease inhibitor I38 family. As to quaternary structure, monomer.

It is found in the periplasm. Its function is as follows. Inhibitor of the extracellular proteases A, B, and C of E.chrysanthemi and the S.marcescens 50 kDa extracellular protease. It forms a non-covalent bond with the proteases and may prevent autocatalytic cleavage of the proteases zymogen in the periplasm. In Dickeya chrysanthemi (Pectobacterium chrysanthemi), this protein is Proteinase inhibitor (inh).